We begin with the raw amino-acid sequence, 210 residues long: Cytochrome c4 (210 aa).

The N-terminal stretch at 1–20 (MNKALVTLLLTLGITGLAHA) is a signal peptide. Positions 34, 37, 38, 86, 139, 142, 143, and 187 each coordinate heme c.

Post-translationally, binds 2 heme c groups covalently per subunit.

The protein localises to the periplasm. In terms of biological role, diheme, high potential cytochrome c believed to be an intermediate electron donor to terminal oxidation systems. The sequence is that of Cytochrome c4 (cycA) from Azotobacter vinelandii.